Here is a 780-residue protein sequence, read N- to C-terminus: Ino eighty subunit 1 (780 aa).

2 disordered regions span residues 1–25 (MADV…QQIH) and 563–780 (ANGP…PGWN). Residues 563–584 (ANGPRRDRKKEREERQKAREEA) are compositionally biased toward basic and acidic residues. Positions 600 to 613 (SRARAQRNAKRKLA) are enriched in basic residues. The segment covering 614–635 (RAAAAASSTPSASTPKTAAARS) has biased composition (low complexity). Acidic residues-rich tracts occupy residues 676-686 (LEGEESLDDID) and 723-751 (DADD…EGDD).

Component of the chromatin-remodeling INO80 complex.

It localises to the nucleus. Probably involved in transcription regulation via its interaction with the INO80 complex, a chromatin-remodeling complex. This chain is Ino eighty subunit 1, found in Emericella nidulans (strain FGSC A4 / ATCC 38163 / CBS 112.46 / NRRL 194 / M139) (Aspergillus nidulans).